A 250-amino-acid polypeptide reads, in one-letter code: Carboxy-S-adenosyl-L-methionine synthase (250 aa).

S-adenosyl-L-methionine contacts are provided by residues Tyr-45, 70–72 (GCS), 95–96 (DN), 123–124 (DI), Asn-138, and Arg-205.

Belongs to the class I-like SAM-binding methyltransferase superfamily. Cx-SAM synthase family. Homodimer.

The catalysed reaction is prephenate + S-adenosyl-L-methionine = carboxy-S-adenosyl-L-methionine + 3-phenylpyruvate + H2O. Functionally, catalyzes the conversion of S-adenosyl-L-methionine (SAM) to carboxy-S-adenosyl-L-methionine (Cx-SAM). The polypeptide is Carboxy-S-adenosyl-L-methionine synthase (Marinobacter nauticus (strain ATCC 700491 / DSM 11845 / VT8) (Marinobacter aquaeolei)).